Consider the following 115-residue polypeptide: NADH-ubiquinone oxidoreductase chain 3 (115 aa).

3 helical membrane passes run 3–23 (LMLTLLTNTLLASLLVLIAFW), 55–75 (FFLVAITFLLFDLEIALLLPL), and 84–104 (LNTMLIMALVLISLLAISLAY).

The protein belongs to the complex I subunit 3 family. As to quaternary structure, core subunit of respiratory chain NADH dehydrogenase (Complex I) which is composed of 45 different subunits. Interacts with TMEM186. Interacts with TMEM242.

Its subcellular location is the mitochondrion inner membrane. The enzyme catalyses a ubiquinone + NADH + 5 H(+)(in) = a ubiquinol + NAD(+) + 4 H(+)(out). In terms of biological role, core subunit of the mitochondrial membrane respiratory chain NADH dehydrogenase (Complex I) which catalyzes electron transfer from NADH through the respiratory chain, using ubiquinone as an electron acceptor. Essential for the catalytic activity of complex I. The chain is NADH-ubiquinone oxidoreductase chain 3 from Equus caballus (Horse).